Reading from the N-terminus, the 453-residue chain is Chromosomal replication initiator protein DnaA (453 aa).

A domain I, interacts with DnaA modulators region spans residues 1 to 75; the sequence is MSENMEELWS…SLKKISGKQL (75 aa). The tract at residues 75–114 is domain II; that stretch reads LKIKFLLPGEKIKMEEQNNENEEKPESTSKKSSQGSEHTT. Positions 87 to 103 are enriched in basic and acidic residues; sequence KMEEQNNENEEKPESTS. The interval 87–112 is disordered; the sequence is KMEEQNNENEEKPESTSKKSSQGSEH. A domain III, AAA+ region region spans residues 115-331; it reads WLNPKYTFDT…GGLIRVIAYS (217 aa). Residues G159, G161, K162, and T163 each contribute to the ATP site. Positions 332-453 are domain IV, binds dsDNA; it reads SMANKKITKE…DEIKNLLHGD (122 aa).

The protein belongs to the DnaA family. Oligomerizes as a right-handed, spiral filament on DNA at oriC.

The protein resides in the cytoplasm. Plays an essential role in the initiation and regulation of chromosomal replication. ATP-DnaA binds to the origin of replication (oriC) to initiate formation of the DNA replication initiation complex once per cell cycle. Binds the DnaA box (a 9 base pair repeat at the origin) and separates the double-stranded (ds)DNA. Forms a right-handed helical filament on oriC DNA; dsDNA binds to the exterior of the filament while single-stranded (ss)DNA is stabiized in the filament's interior. The ATP-DnaA-oriC complex binds and stabilizes one strand of the AT-rich DNA unwinding element (DUE), permitting loading of DNA polymerase. After initiation quickly degrades to an ADP-DnaA complex that is not apt for DNA replication. Binds acidic phospholipids. The polypeptide is Chromosomal replication initiator protein DnaA (Natranaerobius thermophilus (strain ATCC BAA-1301 / DSM 18059 / JW/NM-WN-LF)).